Here is a 186-residue protein sequence, read N- to C-terminus: Ribosome-recycling factor (186 aa).

Belongs to the RRF family.

It is found in the cytoplasm. Functionally, responsible for the release of ribosomes from messenger RNA at the termination of protein biosynthesis. May increase the efficiency of translation by recycling ribosomes from one round of translation to another. This Prosthecochloris aestuarii (strain DSM 271 / SK 413) protein is Ribosome-recycling factor.